A 720-amino-acid chain; its full sequence is Serrate RNA effector molecule (720 aa).

Disordered stretches follow at residues Met-1 to Arg-192, Leu-288 to Asp-335, and Glu-361 to Gly-380. Residues Ser-33–Pro-47 are compositionally biased toward low complexity. The span at Leu-48–Ser-76 shows a compositional bias: basic and acidic residues. Residues Ser-76, Ser-90, and Ser-92 each carry the phosphoserine modification. A compositionally biased stretch (basic residues) spans Asp-99–Tyr-115. 2 stretches are compositionally biased toward basic and acidic residues: residues Arg-116–Arg-126 and Pro-136–His-164. Residues Leu-288–Pro-297 are compositionally biased toward polar residues. A compositionally biased stretch (basic and acidic residues) spans Glu-368–His-378. A C2H2-type zinc finger spans residues Tyr-498–His-523. Disordered stretches follow at residues Tyr-543–Gly-622 and Arg-666–Leu-687. Over residues Pro-570 to Asn-607 the composition is skewed to basic and acidic residues. Gly residues predominate over residues Asp-608–Gly-622. Ser-689 is modified (phosphoserine).

It belongs to the ARS2 family. As to quaternary structure, interacts with HYL1. Interacts with RCF3, RS40 and RS41. Expressed in shoot meristems and in emerging organ primordia throughout development.

The protein resides in the nucleus. It localises to the nucleus speckle. In terms of biological role, acts as a mediator between the cap-binding complex (CBC) and both the pre-mRNA splicing and primary microRNAs (miRNAs) processing machinery. Required for proper processing of primary miRNAs to miRNAs, thereby playing a role in RNA-mediated gene silencing (RNAi) by miRNAs. Does not participate in sense post-transcriptional gene silencing. Acts as a regulator of meristem activity and adaxial leaf fate via the miRNA gene-silencing pathway by regulating the expression of PHB and by limiting the competence of shoot tissue to respond to KNOX expression. Its function is however not limited to miRNA-mediated repression of leaf polarity genes, but rather acts as a general regulator of primary microRNAs processing. Also critical for the accumulation of the trans-acting small interfering RNA (ta-siRNA). Required for pre-mRNA splicing. In Arabidopsis thaliana (Mouse-ear cress), this protein is Serrate RNA effector molecule (SE).